The following is a 621-amino-acid chain: Elongation factor 4 (621 aa).

The 183-residue stretch at 21–203 folds into the tr-type G domain; sequence DLIRNICIIA…AIVKRVPPPK (183 aa). Residues 33-38 and 150-153 contribute to the GTP site; these read DHGKTT and NKID.

Belongs to the TRAFAC class translation factor GTPase superfamily. Classic translation factor GTPase family. LepA subfamily.

It localises to the cell inner membrane. It carries out the reaction GTP + H2O = GDP + phosphate + H(+). Functionally, required for accurate and efficient protein synthesis under certain stress conditions. May act as a fidelity factor of the translation reaction, by catalyzing a one-codon backward translocation of tRNAs on improperly translocated ribosomes. Back-translocation proceeds from a post-translocation (POST) complex to a pre-translocation (PRE) complex, thus giving elongation factor G a second chance to translocate the tRNAs correctly. Binds to ribosomes in a GTP-dependent manner. The chain is Elongation factor 4 from Thermotoga maritima (strain ATCC 43589 / DSM 3109 / JCM 10099 / NBRC 100826 / MSB8).